The primary structure comprises 268 residues: Ribosomal RNA small subunit methyltransferase A (268 aa).

S-adenosyl-L-methionine is bound by residues N18, L20, G45, E66, D91, and N112.

Belongs to the class I-like SAM-binding methyltransferase superfamily. rRNA adenine N(6)-methyltransferase family. RsmA subfamily.

The protein resides in the cytoplasm. The enzyme catalyses adenosine(1518)/adenosine(1519) in 16S rRNA + 4 S-adenosyl-L-methionine = N(6)-dimethyladenosine(1518)/N(6)-dimethyladenosine(1519) in 16S rRNA + 4 S-adenosyl-L-homocysteine + 4 H(+). Its function is as follows. Specifically dimethylates two adjacent adenosines (A1518 and A1519) in the loop of a conserved hairpin near the 3'-end of 16S rRNA in the 30S particle. May play a critical role in biogenesis of 30S subunits. The sequence is that of Ribosomal RNA small subunit methyltransferase A from Shewanella baltica (strain OS185).